The following is a 182-amino-acid chain: Oligoribonuclease (182 aa).

The Exonuclease domain occupies 8 to 171 (LIWIDLEMTG…DDIRESIKEL (164 aa)). Tyr-129 is a catalytic residue.

This sequence belongs to the oligoribonuclease family.

The protein localises to the cytoplasm. Its function is as follows. 3'-to-5' exoribonuclease specific for small oligoribonucleotides. This Actinobacillus succinogenes (strain ATCC 55618 / DSM 22257 / CCUG 43843 / 130Z) protein is Oligoribonuclease.